Consider the following 673-residue polypeptide: F420-dependent formate dehydrogenase subunit alpha (673 aa).

The region spanning 3-59 is the 4Fe-4S Mo/W bis-MGD-type domain; that stretch reads FKIVNTICPYCGVGCGLGLVVKDGRVIGIHPNKRHPINEGKLCAKGNYCYQFIHSKD. Positions 10, 13, 17, and 45 each coordinate [4Fe-4S] cluster. A non-standard amino acid (selenocysteine) is located at residue Sec131.

It belongs to the prokaryotic molybdopterin-containing oxidoreductase family. As to quaternary structure, dimer of an alpha (FdhA) and a beta (FdhB) subunit. It depends on [4Fe-4S] cluster as a cofactor. Mo-bis(molybdopterin guanine dinucleotide) serves as cofactor. Requires Zn(2+) as cofactor.

The enzyme catalyses oxidized coenzyme F420-(gamma-L-Glu)(n) + formate + 2 H(+) = reduced coenzyme F420-(gamma-L-Glu)(n) + CO2. Its function is as follows. Catalyzes the oxidation of formate to carbon dioxide, with coenzyme F420 as the electron acceptor. This is F420-dependent formate dehydrogenase subunit alpha (fdhA) from Methanocaldococcus jannaschii (strain ATCC 43067 / DSM 2661 / JAL-1 / JCM 10045 / NBRC 100440) (Methanococcus jannaschii).